Reading from the N-terminus, the 149-residue chain is Small ribosomal subunit protein uS9 (149 aa).

This sequence belongs to the universal ribosomal protein uS9 family.

The protein resides in the cytoplasm. The protein is Small ribosomal subunit protein uS9 (RPS16A) of Oryza sativa subsp. indica (Rice).